A 1460-amino-acid chain; its full sequence is Collagen alpha-1(I) chain (1460 aa).

The N-terminal stretch at 1–22 (MFSFVDLRLLLLLAATALLTHG) is a signal peptide. A propeptide spans 23–157 (QEEGQEEDIP…PPGLGGNFAP (135 aa)) (N-terminal propeptide). Residues 34–92 (VTCVQNGLRYYDRDVWKPEACRICVCDNGNVLCDDVICDETKNCPGAQVPPGECCPVCP) enclose the VWFC domain. The tract at residues 96-1213 (ASPTDQETTG…KAHDGGRYYR (1118 aa)) is disordered. Over residues 134–149 (PGLPGPPGPPGPPGPP) the composition is skewed to pro residues. A nonhelical region (N-terminal) region spans residues 158 to 174 (QMSYGYDEKSTGGISVP). At Lys166 the chain carries Allysine. Ser167 carries the post-translational modification Phosphoserine. A triple-helical region region spans residues 175-1188 (GPMGPSGPRG…PGPPGPPGPP (1014 aa)). A 4-hydroxyproline mark is found at Pro186, Pro189, Pro192, Pro201, Pro204, Pro207, Pro222, Pro237, Pro243, Pro252, and Pro258. The span at 194-213 (PQGFQGPPGEPGEPGASGPM) shows a compositional bias: low complexity. Residues 225–239 (NGDDGEAGKPGRPGE) are compositionally biased toward basic and acidic residues. Position 261 is a 5-hydroxylysine; alternate (Lys261). O-linked (Gal...) hydroxylysine; alternate glycosylation is present at Lys261. A Phosphoserine modification is found at Ser267. The segment covering 275–291 (DAGPAGPKGEPGSPGEN) has biased composition (low complexity). 4-hydroxyproline is present on residues Pro285, Pro288, Pro294, Pro303, and Pro309. Residues 314-327 (PAGARGNDGATGAA) show a composition bias toward low complexity. Residues 329–341 (PPGPTGPAGPPGF) show a composition bias toward pro residues. A 4-hydroxyproline mark is found at Pro330, Pro339, Pro342, Pro369, Pro372, Pro384, Pro390, Pro399, Pro405, Pro408, and Pro423. Residues 375–414 (AGAAGPAGNPGADGQPGAKGANGAPGIAGAPGFPGARGPS) show a composition bias toward low complexity. Lys426 is subject to 5-hydroxylysine. Pro432, Pro435, Pro447, Pro456, Pro471, Pro477, Pro486, and Pro492 each carry 4-hydroxyproline. Residues 481 to 490 (GERGGPGSRG) are compositionally biased toward gly residues. Lys501 bears the 5-hydroxylysine mark. 4-hydroxyproline occurs at positions 510, 519, 525, 531, 540, 543, 552, 561, 567, 579, 588, 597, 600, 618, 636, 642, 648, 654, 660, 666, 678, 687, 699, 711, 714, 720, 726, and 735. Residues 534-560 (KGLTGSPGSPGPDGKTGPPGPAGQDGR) show a composition bias toward low complexity. A compositionally biased stretch (low complexity) spans 569–588 (ARGQAGVMGFPGPKGAAGEP). The segment covering 630-657 (QGPAGSPGFQGLPGPAGPPGEAGKPGEQ) has biased composition (low complexity). Over residues 692-720 (PRGANGAPGNDGAKGDAGAPGAPGSQGAP) the composition is skewed to low complexity. The Cell attachment site signature appears at 741–743 (RGD). Residue Lys747 is modified to 5-hydroxylysine. 4-hydroxyproline occurs at positions 753, 768, and 774. Over residues 780-794 (AGPSGPAGPTGARGA) the composition is skewed to low complexity. Residue Ser783 is modified to Phosphoserine. 4-hydroxyproline occurs at positions 795, 801, 804, 813, 819, 837, 846, and 855. Residues 807–834 (AGFAGPPGADGQPGAKGEPGDAGAKGDA) show a composition bias toward low complexity. Residues 836-848 (PPGPAGPTGPPGP) show a composition bias toward pro residues. Residue Lys858 is modified to 5-hydroxylysine. Low complexity predominate over residues 863–879 (SAGPPGATGFPGAAGRV). A 4-hydroxyproline mark is found at Pro867 and Pro873. Position 881 is a 3-hydroxyproline (Pro881). Pro882, Pro891, Pro894, Pro915, Pro924, Pro933, Pro942, Pro960, Pro969, Pro972, Pro978, Pro993, Pro999, Pro1005, Pro1014, and Pro1020 each carry 4-hydroxyproline. Positions 908–917 (ETGPAGRPGE) are enriched in low complexity. The span at 927 to 951 (AGEKGSPGADGPAGAPGTPGPQGIA) shows a compositional bias: low complexity. A compositionally biased stretch (pro residues) spans 992 to 1002 (PPGPMGPPGLA). Residues 1004-1019 (PPGESGREGSPGAEGS) are compositionally biased toward low complexity. 5-hydroxylysine is present on Lys1029. Residues 1038–1053 (AGPPGAPGAPGAPGPV) show a composition bias toward pro residues. Residues Pro1041, Pro1044, and Pro1047 each carry the 4-hydroxyproline modification. A compositionally biased stretch (low complexity) spans 1074-1088 (IGPVGARGPAGPQGP). The short motif at 1089–1091 (RGD) is the Cell attachment site element. The segment covering 1089 to 1103 (RGDKGETGEQGDRGI) has biased composition (basic and acidic residues). Lys1092 is subject to 5-hydroxylysine. Residue Lys1104 is modified to 5-hydroxylysine; alternate. O-linked (Gal...) hydroxylysine; alternate glycosylation is present at Lys1104. 4-hydroxyproline occurs at positions 1116, 1119, 1122, 1140, and 1155. Residues 1122–1155 (PGEQGPSGASGPAGPRGPPGSAGSPGKDGLNGLP) are compositionally biased toward low complexity. At Pro1160 the chain carries 3-hydroxyproline. Residue Pro1161 is modified to 4-hydroxyproline. The segment covering 1173–1188 (VGPPGPPGPPGPPGPP) has biased composition (pro residues). 3-hydroxyproline is present on Pro1175. 4-hydroxyproline is present on Pro1176. The residue at position 1178 (Pro1178) is a 3-hydroxyproline. Residue Pro1179 is modified to 4-hydroxyproline. Residue Pro1181 is modified to 3-hydroxyproline. Pro1182, Pro1185, and Pro1188 each carry 4-hydroxyproline. The tract at residues 1189-1214 (SGGFDFSFLPQPPQEKAHDGGRYYRA) is nonhelical region (C-terminal). Residues 1203 to 1213 (EKAHDGGRYYR) show a composition bias toward basic and acidic residues. Lys1204 carries the allysine modification. The propeptide at 1215-1460 (DDANVVRDRD…GMDIGPVCFL (246 aa)) is C-terminal propeptide. The Fibrillar collagen NC1 domain occupies 1225–1460 (LEVDTTLKSL…GMDIGPVCFL (236 aa)). 3 disulfides stabilise this stretch: Cys1255–Cys1287, Cys1295–Cys1458, and Cys1366–Cys1411. 5 residues coordinate Ca(2+): Asp1273, Asn1275, Gln1276, Cys1278, and Asp1281. The N-linked (GlcNAc...) asparagine glycan is linked to Asn1361.

The protein belongs to the fibrillar collagen family. Trimers of one alpha 2(I) and two alpha 1(I) chains. Interacts with MRC2. Interacts with TRAM2. Interacts with MFAP4 in a Ca (2+)-dependent manner. Post-translationally, contains mostly 4-hydroxyproline. Proline residues at the third position of the tripeptide repeating unit (G-X-Y) are hydroxylated in some or all of the chains. Contains 3-hydroxyproline at a few sites. This modification occurs on the first proline residue in the sequence motif Gly-Pro-Hyp, where Hyp is 4-hydroxyproline. In terms of processing, lysine residues at the third position of the tripeptide repeating unit (G-X-Y) are 5-hydroxylated in some or all of the chains. Post-translationally, O-glycosylated on hydroxylated lysine residues. The O-linked glycan consists of a Glc-Gal disaccharide.

The protein resides in the secreted. The protein localises to the extracellular space. Its subcellular location is the extracellular matrix. In terms of biological role, type I collagen is a member of group I collagen (fibrillar forming collagen). The protein is Collagen alpha-1(I) chain (COL1A1) of Canis lupus familiaris (Dog).